The following is a 178-amino-acid chain: Interleukin-10 (178 aa).

The N-terminal stretch at 1–18 (MHSSALLCCLVLLTGVRA) is a signal peptide. 2 disulfides stabilise this stretch: Cys30-Cys126 and Cys80-Cys132. N-linked (GlcNAc...) asparagine glycosylation is present at Asn134.

This sequence belongs to the IL-10 family. In terms of assembly, homodimer. Interacts with IL10RA and IL10RB.

It is found in the secreted. Major immune regulatory cytokine that acts on many cells of the immune system where it has profound anti-inflammatory functions, limiting excessive tissue disruption caused by inflammation. Mechanistically, IL10 binds to its heterotetrameric receptor comprising IL10RA and IL10RB leading to JAK1 and STAT2-mediated phosphorylation of STAT3. In turn, STAT3 translocates to the nucleus where it drives expression of anti-inflammatory mediators. Targets antigen-presenting cells (APCs) such as macrophages and monocytes and inhibits their release of pro-inflammatory cytokines including granulocyte-macrophage colony-stimulating factor /GM-CSF, granulocyte colony-stimulating factor/G-CSF, IL-1 alpha, IL-1 beta, IL-6, IL-8 and TNF-alpha. Also interferes with antigen presentation by reducing the expression of MHC-class II and co-stimulatory molecules, thereby inhibiting their ability to induce T cell activation. In addition, controls the inflammatory response of macrophages by reprogramming essential metabolic pathways including mTOR signaling. The chain is Interleukin-10 (IL10) from Macaca fascicularis (Crab-eating macaque).